The chain runs to 277 residues: Multiple sugar-binding transport system permease protein MsmG (277 aa).

6 helical membrane-spanning segments follow: residues 13 to 33 (YVLL…TVFS), 74 to 94 (VITV…AYSI), 110 to 130 (LLIL…TVMM), 141 to 161 (LIIL…VGYI), 198 to 218 (TTLI…LLIL), and 243 to 263 (GPSF…YLIF). One can recognise an ABC transmembrane type-1 domain in the interval 69 to 263 (FWNSTVITVL…ITITIVYLIF (195 aa)).

It belongs to the binding-protein-dependent transport system permease family. MalFG subfamily.

The protein localises to the cell membrane. In terms of biological role, involved in a binding protein-dependent transport system responsible for the uptake of melibiose, raffinose and isomaltotriose. This chain is Multiple sugar-binding transport system permease protein MsmG (msmG), found in Streptococcus mutans serotype c (strain ATCC 700610 / UA159).